The sequence spans 322 residues: Undecaprenyl-phosphate 4-deoxy-4-formamido-L-arabinose transferase (322 aa).

The Cytoplasmic segment spans residues 1–235; that stretch reads MFEIHPVKKV…TCLTTTPLRM (235 aa). A helical transmembrane segment spans residues 236-256; that stretch reads LSLLGSIIAIGGFSIAVLLVI. The Periplasmic segment spans residues 257 to 269; that stretch reads LRLTFGPQWAAEG. Residues 270–290 traverse the membrane as a helical segment; sequence VFMLFAVLFTFIGAQFIGMGL. The Cytoplasmic segment spans residues 291-322; sequence LGEYIGRIYTDVRARPRYFVQQVIRPSSKENE.

The protein belongs to the glycosyltransferase 2 family.

Its subcellular location is the cell inner membrane. It carries out the reaction UDP-4-deoxy-4-formamido-beta-L-arabinose + di-trans,octa-cis-undecaprenyl phosphate = 4-deoxy-4-formamido-alpha-L-arabinopyranosyl di-trans,octa-cis-undecaprenyl phosphate + UDP. The protein operates within glycolipid biosynthesis; 4-amino-4-deoxy-alpha-L-arabinose undecaprenyl phosphate biosynthesis; 4-amino-4-deoxy-alpha-L-arabinose undecaprenyl phosphate from UDP-4-deoxy-4-formamido-beta-L-arabinose and undecaprenyl phosphate: step 1/2. It participates in bacterial outer membrane biogenesis; lipopolysaccharide biosynthesis. Catalyzes the transfer of 4-deoxy-4-formamido-L-arabinose from UDP to undecaprenyl phosphate. The modified arabinose is attached to lipid A and is required for resistance to polymyxin and cationic antimicrobial peptides. The chain is Undecaprenyl-phosphate 4-deoxy-4-formamido-L-arabinose transferase from Escherichia coli O7:K1 (strain IAI39 / ExPEC).